A 620-amino-acid chain; its full sequence is 1-deoxy-D-xylulose-5-phosphate synthase (620 aa).

Thiamine diphosphate contacts are provided by residues His-80 and Gly-121–Ser-123. A Mg(2+)-binding site is contributed by Asp-152. Thiamine diphosphate-binding positions include Gly-153–Ala-154, Asn-181, Tyr-288, and Glu-370. Asn-181 provides a ligand contact to Mg(2+).

The protein belongs to the transketolase family. DXPS subfamily. As to quaternary structure, homodimer. Mg(2+) serves as cofactor. It depends on thiamine diphosphate as a cofactor.

It catalyses the reaction D-glyceraldehyde 3-phosphate + pyruvate + H(+) = 1-deoxy-D-xylulose 5-phosphate + CO2. It participates in metabolic intermediate biosynthesis; 1-deoxy-D-xylulose 5-phosphate biosynthesis; 1-deoxy-D-xylulose 5-phosphate from D-glyceraldehyde 3-phosphate and pyruvate: step 1/1. In terms of biological role, catalyzes the acyloin condensation reaction between C atoms 2 and 3 of pyruvate and glyceraldehyde 3-phosphate to yield 1-deoxy-D-xylulose-5-phosphate (DXP). This is 1-deoxy-D-xylulose-5-phosphate synthase from Photobacterium profundum (strain SS9).